Consider the following 121-residue polypeptide: Small ribosomal subunit protein uS13 (121 aa).

Residues 97–121 (VRGQRTRTNARTRRGARKTVAGRKK) form a disordered region. The segment covering 100 to 121 (QRTRTNARTRRGARKTVAGRKK) has biased composition (basic residues).

This sequence belongs to the universal ribosomal protein uS13 family. In terms of assembly, part of the 30S ribosomal subunit. Forms a loose heterodimer with protein S19. Forms two bridges to the 50S subunit in the 70S ribosome.

In terms of biological role, located at the top of the head of the 30S subunit, it contacts several helices of the 16S rRNA. In the 70S ribosome it contacts the 23S rRNA (bridge B1a) and protein L5 of the 50S subunit (bridge B1b), connecting the 2 subunits; these bridges are implicated in subunit movement. Contacts the tRNAs in the A and P-sites. The polypeptide is Small ribosomal subunit protein uS13 (Prochlorococcus marinus (strain NATL1A)).